The chain runs to 219 residues: Guanylate kinase (219 aa).

In terms of domain architecture, Guanylate kinase-like spans 15–194; the sequence is GLMFVLSSPS…AFAEVQSILK (180 aa). 22–29 provides a ligand contact to ATP; that stretch reads SPSGAGKT.

This sequence belongs to the guanylate kinase family.

The protein localises to the cytoplasm. The catalysed reaction is GMP + ATP = GDP + ADP. In terms of biological role, essential for recycling GMP and indirectly, cGMP. The chain is Guanylate kinase from Nitrobacter hamburgensis (strain DSM 10229 / NCIMB 13809 / X14).